Here is a 214-residue protein sequence, read N- to C-terminus: Adenylate kinase (214 aa).

Residue 10–15 participates in ATP binding; that stretch reads GAGKGT. Positions 30–59 are NMP; that stretch reads STGDMLRAAVKSGSELGKQAKDIMDAGKLV. Residues threonine 31, arginine 36, 57 to 59, 85 to 88, and glutamine 92 each bind AMP; these read KLV and GFPR. Residues 122–159 form an LID region; that stretch reads GRRVHAPSGRVYHVKFNPPKVEGKDDVTGEELTTRKDD. Residues arginine 123 and 132-133 contribute to the ATP site; that span reads VY. Positions 156 and 167 each coordinate AMP. Position 192 is an N6-acetyllysine (lysine 192). Lysine 200 provides a ligand contact to ATP.

The protein belongs to the adenylate kinase family. As to quaternary structure, monomer.

It localises to the cytoplasm. The catalysed reaction is AMP + ATP = 2 ADP. Its pathway is purine metabolism; AMP biosynthesis via salvage pathway; AMP from ADP: step 1/1. Its function is as follows. Catalyzes the reversible transfer of the terminal phosphate group between ATP and AMP. Plays an important role in cellular energy homeostasis and in adenine nucleotide metabolism. The protein is Adenylate kinase of Escherichia coli O45:K1 (strain S88 / ExPEC).